Consider the following 122-residue polypeptide: Autophagy-related protein 8a (122 aa).

Residues 1–21 are disordered; the sequence is MAKSSFKISNPLEARMSESSR. Glycine 117 carries Phosphatidylethanolamine amidated glycine lipidation. A propeptide spans 118–122 (removed in mature form); that stretch reads SLTVA.

The protein belongs to the ATG8 family. As to quaternary structure, interacts with ATG4B. Interacts with NBR1. The C-terminal 5 residues are removed by ATG4 to expose Gly-117 at the C-terminus. This Gly-117 forms then a thioester bond with the 'Cys-558' of ATG7 (E1-like activating enzyme) before being transferred to the 'Cys-258' of ATG3 (the specific E2 conjugating enzyme), in order to be finally amidated with phosphatidylethanolamine. This lipid modification anchors ATG8 to autophagosomes. In terms of tissue distribution, constitutively expressed.

It localises to the cytoplasmic vesicle. It is found in the autophagosome membrane. The protein resides in the vacuole membrane. The protein localises to the cytoplasm. Its subcellular location is the cytoskeleton. Its function is as follows. Ubiquitin-like modifier involved in autophagosomes formation. May mediate the delivery of the autophagosomes to the vacuole via the microtubule cytoskeleton. The polypeptide is Autophagy-related protein 8a (ATG8A) (Arabidopsis thaliana (Mouse-ear cress)).